The following is a 221-amino-acid chain: Guanylate kinase (221 aa).

The Guanylate kinase-like domain maps to G20 to Q198. A27–S34 contacts ATP.

This sequence belongs to the guanylate kinase family.

It is found in the cytoplasm. It catalyses the reaction GMP + ATP = GDP + ADP. Its function is as follows. Essential for recycling GMP and indirectly, cGMP. The chain is Guanylate kinase from Ralstonia nicotianae (strain ATCC BAA-1114 / GMI1000) (Ralstonia solanacearum).